Reading from the N-terminus, the 445-residue chain is Chromosome partition protein MukF (445 aa).

The interval 213–241 is leucine-zipper; that stretch reads LSETSATLRELQDTLQAAGDELQTQILDI.

It belongs to the MukF family. As to quaternary structure, interacts, and probably forms a ternary complex, with MukE and MukB via its C-terminal region. The complex formation is stimulated by calcium or magnesium. It is required for an interaction between MukE and MukB.

It localises to the cytoplasm. The protein resides in the nucleoid. Functionally, involved in chromosome condensation, segregation and cell cycle progression. May participate in facilitating chromosome segregation by condensation DNA from both sides of a centrally located replisome during cell division. Not required for mini-F plasmid partitioning. Probably acts via its interaction with MukB and MukE. Overexpression results in anucleate cells. It has a calcium binding activity. The polypeptide is Chromosome partition protein MukF (Vibrio cholerae serotype O1 (strain ATCC 39315 / El Tor Inaba N16961)).